The primary structure comprises 808 residues: Probable mannosyl-oligosaccharide glucosidase (808 aa).

Over 1–11 (MVSDMLGGNKR) the chain is Cytoplasmic. Residues 12 to 31 (WILFGLLSFLLNCVLVSCSV) form a helical; Signal-anchor for type II membrane protein membrane-spanning segment. Residues 32–808 (EDIEKAANDS…LVVNIMSENY (777 aa)) lie on the Lumenal side of the membrane. The N-linked (GlcNAc...) asparagine glycan is linked to Asn-39. Catalysis depends on Asp-580, which acts as the Proton donor. The Proton acceptor role is filled by Glu-778.

This sequence belongs to the glycosyl hydrolase 63 family.

The protein localises to the endoplasmic reticulum membrane. It catalyses the reaction N(4)-(alpha-D-Glc-(1-&gt;2)-alpha-D-Glc-(1-&gt;3)-alpha-D-Glc-(1-&gt;3)-alpha-D-Man-(1-&gt;2)-alpha-D-Man-(1-&gt;2)-alpha-D-Man-(1-&gt;3)-[alpha-D-Man-(1-&gt;2)-alpha-D-Man-(1-&gt;3)-[alpha-D-Man-(1-&gt;2)-alpha-D-Man-(1-&gt;6)]-alpha-D-Man-(1-&gt;6)]-beta-D-Man-(1-&gt;4)-beta-D-GlcNAc-(1-&gt;4)-beta-D-GlcNAc)-L-asparaginyl-[protein] + H2O = N(4)-(alpha-D-Glc-(1-&gt;3)-alpha-D-Glc-(1-&gt;3)-alpha-D-Man-(1-&gt;2)-alpha-D-Man-(1-&gt;2)-alpha-D-Man-(1-&gt;3)-[alpha-D-Man-(1-&gt;2)-alpha-D-Man-(1-&gt;3)-[alpha-D-Man-(1-&gt;2)-alpha-D-Man-(1-&gt;6)]-alpha-D-Man-(1-&gt;6)]-beta-D-Man-(1-&gt;4)-beta-D-GlcNAc-(1-&gt;4)-beta-D-GlcNAc)-L-asparaginyl-[protein] + beta-D-glucose. Functionally, cleaves the distal alpha 1,2-linked glucose residue from the Glc(3)Man(9)GlcNAc(2) oligosaccharide precursor highly specifically. The chain is Probable mannosyl-oligosaccharide glucosidase from Schizosaccharomyces pombe (strain 972 / ATCC 24843) (Fission yeast).